A 180-amino-acid polypeptide reads, in one-letter code: ATP synthase subunit delta, chloroplastic (180 aa).

The protein belongs to the ATPase delta chain family. F-type ATPases have 2 components, F(1) - the catalytic core - and F(0) - the membrane proton channel. F(1) has five subunits: alpha(3), beta(3), gamma(1), delta(1), epsilon(1). CF(0) has four main subunits: a(1), b(1), b'(1) and c(10-14). The alpha and beta chains form an alternating ring which encloses part of the gamma chain. F(1) is attached to F(0) by a central stalk formed by the gamma and epsilon chains, while a peripheral stalk is formed by the delta, b and b' chains.

The protein resides in the plastid. Its subcellular location is the chloroplast thylakoid membrane. Its function is as follows. F(1)F(0) ATP synthase produces ATP from ADP in the presence of a proton or sodium gradient. F-type ATPases consist of two structural domains, F(1) containing the extramembraneous catalytic core and F(0) containing the membrane proton channel, linked together by a central stalk and a peripheral stalk. During catalysis, ATP synthesis in the catalytic domain of F(1) is coupled via a rotary mechanism of the central stalk subunits to proton translocation. This protein is part of the stalk that links CF(0) to CF(1). It either transmits conformational changes from CF(0) to CF(1) or is implicated in proton conduction. The protein is ATP synthase subunit delta, chloroplastic of Emiliania huxleyi (Coccolithophore).